Reading from the N-terminus, the 178-residue chain is Adenine phosphoribosyltransferase (178 aa).

Belongs to the purine/pyrimidine phosphoribosyltransferase family. In terms of assembly, homodimer.

It localises to the cytoplasm. It carries out the reaction AMP + diphosphate = 5-phospho-alpha-D-ribose 1-diphosphate + adenine. Its pathway is purine metabolism; AMP biosynthesis via salvage pathway; AMP from adenine: step 1/1. Its function is as follows. Catalyzes a salvage reaction resulting in the formation of AMP, that is energically less costly than de novo synthesis. The sequence is that of Adenine phosphoribosyltransferase from Erythrobacter litoralis (strain HTCC2594).